Here is a 350-residue protein sequence, read N- to C-terminus: Galactokinase (350 aa).

Residue 14-17 (EHTD) participates in substrate binding. ATP-binding positions include Ser-46 and 96 to 102 (GAGLSSS). Mg(2+) is bound by residues Ser-102 and Glu-134. Asp-146 serves as the catalytic Proton acceptor. Tyr-196 contacts substrate.

The protein belongs to the GHMP kinase family. GalK subfamily.

The protein localises to the cytoplasm. It carries out the reaction alpha-D-galactose + ATP = alpha-D-galactose 1-phosphate + ADP + H(+). The protein operates within carbohydrate metabolism; galactose metabolism. In terms of biological role, catalyzes the transfer of the gamma-phosphate of ATP to D-galactose to form alpha-D-galactose-1-phosphate (Gal-1-P). This chain is Galactokinase, found in Thermotoga maritima (strain ATCC 43589 / DSM 3109 / JCM 10099 / NBRC 100826 / MSB8).